The chain runs to 257 residues: MSVPLILTILAGAATFIGAFLGVLGQKPSNRLLAFSLGFAAGIMLLISLMEMLPAALAAEGMSPVLGYGMFIFGLLGYFGLDRMLPHAHPQDLMQKSVQPLPKSIKRTAILLTLGISLHNFPEGIATFVTASSNLELGFGIALAVALHNIPEGLAVAGPVYAATGSKRTAILWAGISGLAEILGGVLAWLILGSMISPVVMAAIMAAVAGIMVALSVDELMPLAKEIDPNNNPSYGVLCGMSVMGFSLVLLQTAGIG.

Helical transmembrane passes span 5-25 (LILTILAGAATFIGAFLGVLG), 32-52 (LLAFSLGFAAGIMLLISLMEM), and 61-81 (GMSPVLGYGMFIFGLLGYFGL). Fe(2+) contacts are provided by Asn-120 and Glu-123. Zn(2+)-binding residues include Glu-123 and His-148. 4 consecutive transmembrane segments (helical) span residues 137–157 (LGFGIALAVALHNIPEGLAVA), 171–191 (ILWAGISGLAEILGGVLAWLI), 195–215 (MISPVVMAAIMAAVAGIMVAL), and 236–256 (GVLCGMSVMGFSLVLLQTAGI). Asn-149, Glu-152, and Glu-181 together coordinate Fe(2+). Glu-152 serves as a coordination point for Zn(2+).

It belongs to the ZIP transporter (TC 2.A.5) family. ZupT subfamily.

It localises to the cell inner membrane. It catalyses the reaction Zn(2+)(in) = Zn(2+)(out). Its function is as follows. Mediates zinc uptake. May also transport other divalent cations. This chain is Zinc transporter ZupT, found in Escherichia coli O45:K1 (strain S88 / ExPEC).